Consider the following 549-residue polypeptide: MISKCTFSATVFSLFSLCWGAPSSPVLEAPHTIPLPAAMRVQTGESGFSLKNGVRLPEKNPLSRQAERIFRDNGINTALVKNNADIIFTEDASLGREGYRLAVTPDSISIASGSVNGTLYALQSLVQSIAADKNGAPALPRMDVKDQPRFSWRGLMVDSCRHMMPVRDIKKVLDLMERYKFNTLHWHLTDDQGWRLPIAKYPRLTTVGGARAQSPVIGNRNKGDGIPYSGHYTADEIRDVVRYARDRGITVIPEVEMPGHASAAIAAYPELGNTDIPGYEPRVQETWGVHSYTFSPTEKTFRFLEDVIDEICALFPDSPYIHIGGDEAPKNQWKQSPTAQRVMKDNGLANEHELQSYFIRRVEKMINNRGKRLIGWDEIQEGGLSPTATMMVWRSQMPHIAAQALAQGNDIVMTPNSHLYFDYDQGPGKPAAPEYETINNNQLTWQHVYGLEPVPQGTPREREKQVLGCQANIWTEYIPNLPKWEYHVFPRALALAEVAWTPQELKNEKDFRKRLDRQLPFLDARGVNYKRPDNGAPAQPKAVITRERR.

An N-terminal signal peptide occupies residues 1 to 28 (MISKCTFSATVFSLFSLCWGAPSSPVLE). Position 161 (Arg-161) interacts with substrate. Active-site charge relay system residues include Asp-190 and His-260. Asp-326 serves as a coordination point for substrate. The active-site Charge relay system is the Glu-327. Substrate is bound by residues Trp-393, 420 to 422 (YFD), and 474 to 476 (WTE). The tract at residues 526–549 (GVNYKRPDNGAPAQPKAVITRERR) is disordered.

Belongs to the glycosyl hydrolase 20 family.

It carries out the reaction Hydrolysis of terminal non-reducing N-acetyl-D-hexosamine residues in N-acetyl-beta-D-hexosaminides.. With respect to regulation, inhibited strongly by Cu(2+), Zn(2+), Cd(2+) and Ni(2+) ions. No effect on activity with Na(+), Li(+), K(+), Ca(2+), Mg(2+) or Mn(2+) ions. Potentially capable of cleaving the specific glycoside linkages in the process of mucin degradation in human intestinal tract. Hydrolyzes chromogenic substrates pNP-beta-GlcNAc with high activity and pNP-beta-GalNAc to a lesser extent, but not pNP-beta-glucose or pNP-beta-galactose. The polypeptide is Beta-hexosaminidase Amuc_0868 (Akkermansia muciniphila (strain ATCC BAA-835 / DSM 22959 / JCM 33894 / BCRC 81048 / CCUG 64013 / CIP 107961 / Muc)).